The sequence spans 150 residues: Lipoprotein signal peptidase (150 aa).

2 consecutive transmembrane segments (helical) span residues 58-78 (FFII…FKST) and 85-107 (SFSL…GYVV). Active-site residues include D108 and D122. Residues 117–137 (VFNLADFFITGGVLLLTFLIL) form a helical membrane-spanning segment.

Belongs to the peptidase A8 family.

The protein localises to the cell membrane. The enzyme catalyses Release of signal peptides from bacterial membrane prolipoproteins. Hydrolyzes -Xaa-Yaa-Zaa-|-(S,diacylglyceryl)Cys-, in which Xaa is hydrophobic (preferably Leu), and Yaa (Ala or Ser) and Zaa (Gly or Ala) have small, neutral side chains.. The protein operates within protein modification; lipoprotein biosynthesis (signal peptide cleavage). Functionally, this protein specifically catalyzes the removal of signal peptides from prolipoproteins. The protein is Lipoprotein signal peptidase of Caldicellulosiruptor bescii (strain ATCC BAA-1888 / DSM 6725 / KCTC 15123 / Z-1320) (Anaerocellum thermophilum).